The chain runs to 265 residues: Undecaprenyl-diphosphatase (265 aa).

7 consecutive transmembrane segments (helical) span residues 38 to 58, 75 to 95, 108 to 128, 135 to 155, 181 to 201, 215 to 235, and 244 to 264; these read RSDF…CLAL, RDYV…GLIV, PVAW…HVAG, VVTW…GVFP, FVFM…LLEM, VAVA…WLLS, and VFAV…PAAA.

It belongs to the UppP family.

The protein localises to the cell inner membrane. It carries out the reaction di-trans,octa-cis-undecaprenyl diphosphate + H2O = di-trans,octa-cis-undecaprenyl phosphate + phosphate + H(+). Catalyzes the dephosphorylation of undecaprenyl diphosphate (UPP). Confers resistance to bacitracin. The sequence is that of Undecaprenyl-diphosphatase from Xanthomonas oryzae pv. oryzae (strain MAFF 311018).